The primary structure comprises 509 residues: MEEFQRSLQLARSHEHDFLYPLIFQEYIYALAHNHVLNRSISSLLETKGSDNKSSLLIVKRLIPRMYQQNYLIIPENDSNQNPFGGRNNNLYSQMISEGFAVIVEIPFSLRLLAFLEGNEQERLKWKNLRSIHSTFPFLEDSFSHFNYVLDILIPHPVHLEILVQILRYWVKDTSSLHLLRFYLYQSHNWNSLITPKKSSSFFSKRNKRFFFFLYNSHVRESESIFVFLCNQSSHLRSLSSEDLLERIYFYGKIERLIEVFANAFPVMTLRLFKDPFMHYVRYQGKSILGSKGTSLLMNKWKYYLVHLWQCHFYLWSPPGRIYRTQLPNHSLDFMGYFSSVRLNPSTIRSQMLENAFLIANAIRNFETVVPILHLIASLAKAKFCNVFGYPISKPVWADLSDSDIIDRFGRICRNLSHYYSGSSQKKSLYQIKYILRLSCARTLARKHKMSVRVFLKRFDSELLEEFLTAEEQVLSLTFSRASSAFLGLDRGRVWYLDIFCINDRASHE.

This sequence belongs to the intron maturase 2 family. MatK subfamily.

Its subcellular location is the plastid. It is found in the chloroplast. Functionally, usually encoded in the trnK tRNA gene intron. Probably assists in splicing its own and other chloroplast group II introns. The protein is Maturase K of Eucommia ulmoides (Hardy rubber tree).